A 445-amino-acid chain; its full sequence is Bifunctional protein GlmU (445 aa).

Residues 1–218 (MRALVLAAGK…LLEITGVNTR (218 aa)) are pyrophosphorylase. Residues 6–9 (LAAG), K20, Q69, 74–75 (GT), 96–98 (YGD), G134, E147, N162, and N216 contribute to the UDP-N-acetyl-alpha-D-glucosamine site. Mg(2+) is bound at residue D98. N216 provides a ligand contact to Mg(2+). Residues 219–239 (KTLVWLEEQLRMRKIEELLEN) are linker. The segment at 240-445 (GVTILDPATT…GWVLKKRKEE (206 aa)) is N-acetyltransferase. The UDP-N-acetyl-alpha-D-glucosamine site is built by R321 and K339. Residue H351 is the Proton acceptor of the active site. Y354 and N365 together coordinate UDP-N-acetyl-alpha-D-glucosamine. Residues A368, 374–375 (NY), S393, A411, and R428 contribute to the acetyl-CoA site.

The protein in the N-terminal section; belongs to the N-acetylglucosamine-1-phosphate uridyltransferase family. In the C-terminal section; belongs to the transferase hexapeptide repeat family. As to quaternary structure, homotrimer. Mg(2+) is required as a cofactor.

Its subcellular location is the cytoplasm. It catalyses the reaction alpha-D-glucosamine 1-phosphate + acetyl-CoA = N-acetyl-alpha-D-glucosamine 1-phosphate + CoA + H(+). The catalysed reaction is N-acetyl-alpha-D-glucosamine 1-phosphate + UTP + H(+) = UDP-N-acetyl-alpha-D-glucosamine + diphosphate. It functions in the pathway nucleotide-sugar biosynthesis; UDP-N-acetyl-alpha-D-glucosamine biosynthesis; N-acetyl-alpha-D-glucosamine 1-phosphate from alpha-D-glucosamine 6-phosphate (route II): step 2/2. It participates in nucleotide-sugar biosynthesis; UDP-N-acetyl-alpha-D-glucosamine biosynthesis; UDP-N-acetyl-alpha-D-glucosamine from N-acetyl-alpha-D-glucosamine 1-phosphate: step 1/1. The protein operates within bacterial outer membrane biogenesis; LPS lipid A biosynthesis. In terms of biological role, catalyzes the last two sequential reactions in the de novo biosynthetic pathway for UDP-N-acetylglucosamine (UDP-GlcNAc). The C-terminal domain catalyzes the transfer of acetyl group from acetyl coenzyme A to glucosamine-1-phosphate (GlcN-1-P) to produce N-acetylglucosamine-1-phosphate (GlcNAc-1-P), which is converted into UDP-GlcNAc by the transfer of uridine 5-monophosphate (from uridine 5-triphosphate), a reaction catalyzed by the N-terminal domain. This Thermotoga sp. (strain RQ2) protein is Bifunctional protein GlmU.